Here is a 157-residue protein sequence, read N- to C-terminus: Ribosomal RNA large subunit methyltransferase H (157 aa).

Residues Leu73, Gly105, and 124–129 (LSRMTF) each bind S-adenosyl-L-methionine.

The protein belongs to the RNA methyltransferase RlmH family. Homodimer.

Its subcellular location is the cytoplasm. The catalysed reaction is pseudouridine(1915) in 23S rRNA + S-adenosyl-L-methionine = N(3)-methylpseudouridine(1915) in 23S rRNA + S-adenosyl-L-homocysteine + H(+). Specifically methylates the pseudouridine at position 1915 (m3Psi1915) in 23S rRNA. The polypeptide is Ribosomal RNA large subunit methyltransferase H (Porphyromonas gingivalis (strain ATCC BAA-308 / W83)).